A 208-amino-acid chain; its full sequence is LexA repressor (208 aa).

The H-T-H motif DNA-binding region spans 28–48 (VREIGEAVGLASSSTVHGHLA). Catalysis depends on for autocatalytic cleavage activity residues Ser-130 and Lys-168.

Belongs to the peptidase S24 family. As to quaternary structure, homodimer.

The catalysed reaction is Hydrolysis of Ala-|-Gly bond in repressor LexA.. Functionally, represses a number of genes involved in the response to DNA damage (SOS response), including recA and lexA. In the presence of single-stranded DNA, RecA interacts with LexA causing an autocatalytic cleavage which disrupts the DNA-binding part of LexA, leading to derepression of the SOS regulon and eventually DNA repair. This Shouchella clausii (strain KSM-K16) (Alkalihalobacillus clausii) protein is LexA repressor.